Reading from the N-terminus, the 942-residue chain is DDB1- and CUL4-associated factor 5 (942 aa).

WD repeat units lie at residues 51 to 91 (GHFG…HSRV), 99 to 139 (EHHS…LDVF), 140 to 180 (AHED…HGEP), 185 to 225 (NYPS…SSLL), 277 to 317 (FNSC…EAGG), and 331 to 370 (GHRS…GCTG). 2 disordered regions span residues 449-478 (GVSE…ESAD) and 490-509 (TTNT…AASR). Residues 454-465 (SGYTDSESSASL) are compositionally biased toward polar residues. Thr500 is modified (phosphothreonine). Phosphoserine is present on residues Ser531, Ser533, Ser626, Ser628, Ser645, Ser648, and Ser651. Disordered stretches follow at residues 544–655 (TDLF…DIES), 676–824 (NNKD…EERS), and 889–942 (ACET…KLKT). Residues 625–641 (LSSSPTSSPERSTSTLE) show a composition bias toward low complexity. 2 stretches are compositionally biased toward basic and acidic residues: residues 690–701 (DEGRAGTSHKDN) and 728–738 (CSKDTFKEETP). A compositionally biased stretch (polar residues) spans 760 to 770 (GTSQDTGNSGS). The residue at position 794 (Ser794) is a Phosphoserine. Residues 801 to 815 (SGSTLNSGSGNCPRT) are compositionally biased toward polar residues.

As to quaternary structure, interacts with DDB1, CUL4A or CUL4B. Interacts with L3MBTL3. Interacts with DNMT1. Interacts with E2F1. Interacts with SOX2. As to expression, ubiquitous.

Its pathway is protein modification; protein ubiquitination. Its function is as follows. Is a substrate receptor for the CUL4-DDB1 E3 ubiquitin-protein ligase complex (CRL4). The complex CRL4-DCAF5 is involved in the ubiquitination of a set of methylated non-histone proteins, including SOX2, DNMT1 and E2F1. This is DDB1- and CUL4-associated factor 5 (DCAF5) from Homo sapiens (Human).